The following is a 67-amino-acid chain: DNA-directed RNA polymerase subunit omega (67 aa).

Belongs to the RNA polymerase subunit omega family. The RNAP catalytic core consists of 2 alpha, 1 beta, 1 beta' and 1 omega subunit. When a sigma factor is associated with the core the holoenzyme is formed, which can initiate transcription.

It carries out the reaction RNA(n) + a ribonucleoside 5'-triphosphate = RNA(n+1) + diphosphate. Functionally, promotes RNA polymerase assembly. Latches the N- and C-terminal regions of the beta' subunit thereby facilitating its interaction with the beta and alpha subunits. This is DNA-directed RNA polymerase subunit omega from Bordetella avium (strain 197N).